The chain runs to 449 residues: Adenylosuccinate synthetase (449 aa).

Residues 37–43 and 65–67 each bind GTP; these read GDEGKGK and GHT. D38 serves as the catalytic Proton acceptor. D38 and G65 together coordinate Mg(2+). Residues 38 to 41, 63 to 66, T155, R169, N247, T262, and R326 each bind IMP; these read DEGK and NAGH. H66 serves as the catalytic Proton donor. 322–328 is a binding site for substrate; that stretch reads VTTKRKR. Residues R328, 354–356, and 437–439 contribute to the GTP site; these read KLD and GVG.

This sequence belongs to the adenylosuccinate synthetase family. Homodimer. The cofactor is Mg(2+).

Its subcellular location is the cytoplasm. The enzyme catalyses IMP + L-aspartate + GTP = N(6)-(1,2-dicarboxyethyl)-AMP + GDP + phosphate + 2 H(+). It participates in purine metabolism; AMP biosynthesis via de novo pathway; AMP from IMP: step 1/2. In terms of biological role, plays an important role in the de novo pathway and in the salvage pathway of purine nucleotide biosynthesis. Catalyzes the first committed step in the biosynthesis of AMP from IMP. The polypeptide is Adenylosuccinate synthetase (Drosophila willistoni (Fruit fly)).